Reading from the N-terminus, the 688-residue chain is Two-component response regulator ORR23 (688 aa).

A Response regulatory domain is found at 25–140; that stretch reads RVLAVDDDPV…ELRNIWQHVI (116 aa). Asp76 is modified (4-aspartylphosphate). The segment at 161–212 is disordered; that stretch reads PPNADSDHVHGHVTCGSPDQSGRPSKKRKEYCSEEEDEGEVNTQDIDDPSAP. Over residues 193–208 the composition is skewed to acidic residues; that stretch reads SEEEDEGEVNTQDIDD. The segment at residues 211–270 is a DNA-binding region (myb-like GARP); the sequence is APKKPRVVWSVELHRKFVAAVNQLGIDKAVPKRILELMNVEKLTRENVASHLQKYRLYLK.

Belongs to the ARR family. Type-B subfamily. In terms of processing, two-component system major event consists of a His-to-Asp phosphorelay between a sensor histidine kinase (HK) and a response regulator (RR). In plants, the His-to-Asp phosphorelay involves an additional intermediate named Histidine-containing phosphotransfer protein (HPt). This multistep phosphorelay consists of a His-Asp-His-Asp sequential transfer of a phosphate group between first a His and an Asp of the HK protein, followed by the transfer to a conserved His of the HPt protein and finally the transfer to an Asp in the receiver domain of the RR protein.

Its subcellular location is the nucleus. Transcriptional activator that binds specific DNA sequence. Functions as a response regulator involved in His-to-Asp phosphorelay signal transduction system. Phosphorylation of the Asp residue in the receiver domain activates the ability of the protein to promote the transcription of target genes. May directly activate some type-A response regulators in response to cytokinins. This chain is Two-component response regulator ORR23, found in Oryza sativa subsp. indica (Rice).